A 196-amino-acid polypeptide reads, in one-letter code: uncharacterized protein (196 aa).

Residues 11–31 form a helical membrane-spanning segment; sequence ICGFLLVILTIGGVLGGVYLV.

It localises to the membrane. This is an uncharacterized protein from Mycoplasma genitalium (strain ATCC 33530 / DSM 19775 / NCTC 10195 / G37) (Mycoplasmoides genitalium).